We begin with the raw amino-acid sequence, 493 residues long: 3-octaprenyl-4-hydroxybenzoate carboxy-lyase (493 aa).

Asn172 is a binding site for Mn(2+). Prenylated FMN contacts are provided by residues 175–177 (IYR), 189–191 (RWL), and 194–195 (RG). Residue Glu238 participates in Mn(2+) binding. The Proton donor role is filled by Asp287.

This sequence belongs to the UbiD family. In terms of assembly, homohexamer. Requires prenylated FMN as cofactor. It depends on Mn(2+) as a cofactor.

The protein localises to the cell membrane. It carries out the reaction a 4-hydroxy-3-(all-trans-polyprenyl)benzoate + H(+) = a 2-(all-trans-polyprenyl)phenol + CO2. It functions in the pathway cofactor biosynthesis; ubiquinone biosynthesis. Catalyzes the decarboxylation of 3-octaprenyl-4-hydroxy benzoate to 2-octaprenylphenol, an intermediate step in ubiquinone biosynthesis. The protein is 3-octaprenyl-4-hydroxybenzoate carboxy-lyase of Shewanella baltica (strain OS155 / ATCC BAA-1091).